A 796-amino-acid chain; its full sequence is Choline transporter-like 2 (796 aa).

N20 is a glycosylation site (N-linked (GlcNAc...) asparagine). Residues 35 to 55 (PCLLLFVLFLGGWAFIAQYAI) form a helical membrane-spanning segment. Residues N209 and N284 are each glycosylated (N-linked (GlcNAc...) asparagine). 4 helical membrane-spanning segments follow: residues 304-324 (WSIVLVACFCTLVASLIYIAL), 332-352 (ILWFSIFGVLIGLLVGIYFSV), 386-406 (LYLSIFVGVCFVVILLLVIVL), and 431-451 (VFFPIFSWILFIAAIAFAIGV). N488 and N520 each carry an N-linked (GlcNAc...) asparagine glycan. The next 5 helical transmembrane spans lie at 542 to 562 (VFGFLWLSFFISAFSYMVLAS), 585 to 605 (FFQTAVYHLGTVAFGSLILAI), 626 to 648 (AVTRAILCCMRCFFWLLETFLKF), 691 to 711 (FLFFLSKLLLTAGAGASTYYF), and 724 to 744 (IAVPTTVVVIAAFLITSVFFG).

Belongs to the CTL (choline transporter-like) family.

Its subcellular location is the membrane. This is Choline transporter-like 2 from Drosophila melanogaster (Fruit fly).